The chain runs to 704 residues: Meprin A subunit beta (704 aa).

The first 20 residues, 1–20 (MDARHWPWFLVFATFLLVSG), serve as a signal peptide directing secretion. Positions 21 to 64 (LPAPEKFVKDIDGGIDQDIFDINEDLGLDLFEGDIKLEASGRNS) are excised as a propeptide. Residues 21–654 (LPAPEKFVKD…RCEKRGSTKD (634 aa)) are Extracellular-facing. Positions 63-257 (NSIIGDNYRW…LKLNQLYSCT (195 aa)) constitute a Peptidase M12A domain. Intrachain disulfides connect C104–C256, C125–C145, and C266–C428. Zn(2+) is bound at residue H153. E154 is a catalytic residue. The Zn(2+) site is built by H157 and H163. N-linked (GlcNAc...) asparagine glycosylation is found at N193, N219, N316, N422, N437, N528, N547, and N592. The 170-residue stretch at 261–430 (SFMDSCDFEL…INLSETRCPH (170 aa)) folds into the MAM domain. Residues 431 to 585 (HIWHIQNFTQ…GDDVYILLTV (155 aa)) enclose the MATH domain. One can recognise an EGF-like domain in the interval 607-647 (VHNACSEVECQNGGICTLQEGRAECKCPAGEDWWYMGKRCE). Cystine bridges form between C611/C622, C616/C631, and C633/C646. Residues 655–678 (TIVIAVSSTVTVFAVMLIITLISV) traverse the membrane as a helical segment. At 679 to 704 (YCTRRKYRKKASAKTAAMNLENQHAF) the chain is on the cytoplasmic side. Position 693 is a phosphothreonine (T693).

In terms of assembly, homotetramer consisting of disulfide-linked beta subunits, or heterotetramer of two alpha and two beta subunits formed by non-covalent association of two disulfide-linked heterodimers. Interacts with MBL2 through its carbohydrate moiety. This interaction may inhibit its catalytic activity. Interacts with TSPAN8. Zn(2+) serves as cofactor. N-glycosylated; contains high mannose and/or complex biantennary structures. In terms of processing, proteolytically activated by trypsin in the intestinal lumen and kallikrein-related peptidases in other tissues. Post-translationally, phosphorylated by PKC at multiple sites of its cytoplasmic part. Phosphorylation dcreases activity at the cell surface, leading to diminished substrate cleavage. As to expression, kidney, intestinal brush borders and salivary ducts.

It is found in the cell membrane. The protein localises to the secreted. It catalyses the reaction Hydrolysis of proteins, including azocasein, and peptides. Hydrolysis of 5-His-|-Leu-6, 6-Leu-|-Cys-7, 14-Ala-|-Leu-15 and 19-Cys-|-Gly-20 bonds in insulin B chain.. Its activity is regulated as follows. Strongly inhibited by fetuin-A/AHSG. Its function is as follows. Membrane metallopeptidase that sheds many membrane-bound proteins. Exhibits a strong preference for acidic amino acids at the P1' position. Known substrates include: FGF19, VGFA, IL1B, IL18, procollagen I and III, E-cadherin, KLK7, gastrin, ADAM10, tenascin-C. The presence of several pro-inflammatory cytokine among substrates implicate MEP1B in inflammation. It is also involved in tissue remodeling due to its capability to degrade extracellular matrix components. This chain is Meprin A subunit beta (Mep1b), found in Rattus norvegicus (Rat).